Here is a 323-residue protein sequence, read N- to C-terminus: Beta-ketoacyl-[acyl-carrier-protein] synthase III (323 aa).

Catalysis depends on residues cysteine 114 and histidine 250. The segment at 251–255 (QANIR) is ACP-binding. Residue asparagine 280 is part of the active site.

The protein belongs to the thiolase-like superfamily. FabH family. In terms of assembly, homodimer.

It is found in the cytoplasm. The catalysed reaction is malonyl-[ACP] + acetyl-CoA + H(+) = 3-oxobutanoyl-[ACP] + CO2 + CoA. Its pathway is lipid metabolism; fatty acid biosynthesis. In terms of biological role, catalyzes the condensation reaction of fatty acid synthesis by the addition to an acyl acceptor of two carbons from malonyl-ACP. Catalyzes the first condensation reaction which initiates fatty acid synthesis and may therefore play a role in governing the total rate of fatty acid production. Possesses both acetoacetyl-ACP synthase and acetyl transacylase activities. Its substrate specificity determines the biosynthesis of branched-chain and/or straight-chain of fatty acids. This is Beta-ketoacyl-[acyl-carrier-protein] synthase III from Roseobacter denitrificans (strain ATCC 33942 / OCh 114) (Erythrobacter sp. (strain OCh 114)).